The primary structure comprises 160 residues: Nucleotide-binding protein CPS_1098 (160 aa).

The protein belongs to the YajQ family.

Nucleotide-binding protein. This Colwellia psychrerythraea (strain 34H / ATCC BAA-681) (Vibrio psychroerythus) protein is Nucleotide-binding protein CPS_1098.